The primary structure comprises 154 residues: Myoglobin (154 aa).

The Globin domain occupies 2 to 148 (GLSDGEWHLV…FRNDIAAKYK (147 aa)). A Phosphoserine modification is found at serine 4. Histidine 65 contacts nitrite. O2 is bound at residue histidine 65. At threonine 68 the chain carries Phosphothreonine. Histidine 94 is a binding site for heme b.

It belongs to the globin family. In terms of assembly, monomeric.

The protein localises to the cytoplasm. It is found in the sarcoplasm. It carries out the reaction Fe(III)-heme b-[protein] + nitric oxide + H2O = Fe(II)-heme b-[protein] + nitrite + 2 H(+). It catalyses the reaction H2O2 + AH2 = A + 2 H2O. Its function is as follows. Monomeric heme protein which primary function is to store oxygen and facilitate its diffusion within muscle tissues. Reversibly binds oxygen through a pentacoordinated heme iron and enables its timely and efficient release as needed during periods of heightened demand. Depending on the oxidative conditions of tissues and cells, and in addition to its ability to bind oxygen, it also has a nitrite reductase activity whereby it regulates the production of bioactive nitric oxide. Under stress conditions, like hypoxia and anoxia, it also protects cells against reactive oxygen species thanks to its pseudoperoxidase activity. This is Myoglobin (MB) from Halichoerus grypus (Gray seal).